Consider the following 619-residue polypeptide: DNA mismatch repair protein MutL (619 aa).

This sequence belongs to the DNA mismatch repair MutL/HexB family.

Its function is as follows. This protein is involved in the repair of mismatches in DNA. It is required for dam-dependent methyl-directed DNA mismatch repair. May act as a 'molecular matchmaker', a protein that promotes the formation of a stable complex between two or more DNA-binding proteins in an ATP-dependent manner without itself being part of a final effector complex. The chain is DNA mismatch repair protein MutL from Xylella fastidiosa (strain M23).